We begin with the raw amino-acid sequence, 173 residues long: Mesencephalic astrocyte-derived neurotrophic factor homolog (173 aa).

The signal sequence occupies residues 1–22 (MKTWYMVVVIGFLATLVQTSLA). 4 disulfides stabilise this stretch: Cys-28–Cys-114, Cys-31–Cys-103, Cys-61–Cys-72, and Cys-148–Cys-151.

The protein belongs to the ARMET family.

The protein localises to the secreted. Its function is as follows. Required during the maturation of the embryonic nervous system for maintenance of neuronal and cuticular connectivity. Essential for maintenance of dopaminergic neurons and dopamine levels. This is Mesencephalic astrocyte-derived neurotrophic factor homolog from Drosophila yakuba (Fruit fly).